The sequence spans 225 residues: MSSQALDSAKIAFIEAAIEHGVLLFGNFTLKSGRQSPYFFNAGLLYSSSLLSTTAQAYAKVLSSSRIPDFDVLFGPAYKGISLAAVSAVSLYQQTGKDIGYCYNRKEKKDHGEGGTMVGAPLKGRIVIIDDVLTSGKAIREAIDILKASPEAKLVGIVQLVDRQEKGQSGSGKSTVQEVEEEFGVPVEPIIGLDDIVKYLESSGKWEKELQEVRKYRAEYGVQRS.

Lysine 31 provides a ligand contact to 5-phospho-alpha-D-ribose 1-diphosphate. Residue 39-40 (FF) coordinates orotate. Residues 78-79 (YK), arginine 105, lysine 106, lysine 109, histidine 111, and 130-138 (DDVLTSGKA) each bind 5-phospho-alpha-D-ribose 1-diphosphate. Orotate is bound by residues threonine 134 and arginine 163.

The protein belongs to the purine/pyrimidine phosphoribosyltransferase family. PyrE subfamily. Homodimer.

The catalysed reaction is orotidine 5'-phosphate + diphosphate = orotate + 5-phospho-alpha-D-ribose 1-diphosphate. Its pathway is pyrimidine metabolism; UMP biosynthesis via de novo pathway; UMP from orotate: step 1/2. Its function is as follows. Catalyzes the transfer of a ribosyl phosphate group from 5-phosphoribose 1-diphosphate to orotate, leading to the formation of orotidine monophosphate (OMP). The protein is Orotate phosphoribosyltransferase (URA5) of Cryptococcus neoformans var. grubii serotype A (strain H99 / ATCC 208821 / CBS 10515 / FGSC 9487) (Filobasidiella neoformans var. grubii).